Reading from the N-terminus, the 416-residue chain is E3 ubiquitin-protein ligase RNFT1 (416 aa).

2 disordered regions span residues 1-50 (MKHR…MSLP) and 68-117 (DLSS…DSRE). Residues 7–19 (HERQSSTESKNLK) show a composition bias toward basic and acidic residues. Composition is skewed to polar residues over residues 20 to 45 (ETTQ…SPSA) and 68 to 80 (DLSS…VARS). Positions 81–100 (NSRRVRPSTHGRSPSRHGHT) are enriched in basic residues. Transmembrane regions (helical) follow at residues 146–166 (LVVQ…TFLY), 184–204 (LQCL…YYTF), 214–234 (VFMN…VVGI), 237–257 (FIGK…PSFV), 265–287 (YWYM…PVWF), and 302–322 (WHFG…IIFG). The required for ubiquitin ligase activity and for protection against ER stress-induced cell death stretch occupies residues 349 to 400 (CSEADGMCAICQAEFTKPIALICQHVFCEECISSWFNKEKTCPLCRTLISNH). The RING-type zinc finger occupies 356-394 (CAICQAEFTKPIALICQHVFCEECISSWFNKEKTCPLCR).

It localises to the endoplasmic reticulum membrane. The enzyme catalyses S-ubiquitinyl-[E2 ubiquitin-conjugating enzyme]-L-cysteine + [acceptor protein]-L-lysine = [E2 ubiquitin-conjugating enzyme]-L-cysteine + N(6)-ubiquitinyl-[acceptor protein]-L-lysine.. Its pathway is protein modification; protein ubiquitination. In terms of biological role, E3 ubiquitin-protein ligase that acts in the endoplasmic reticulum (ER)-associated degradation (ERAD) pathway, which targets misfolded proteins that accumulate in the endoplasmic reticulum (ER) for ubiquitination and subsequent proteasome-mediated degradation. Protects cells from ER stress-induced apoptosis. The protein is E3 ubiquitin-protein ligase RNFT1 (rnft1) of Xenopus laevis (African clawed frog).